A 406-amino-acid polypeptide reads, in one-letter code: Putative odorant receptor 65b (406 aa).

Residues 1 to 55 (MDIQRFLKFYKVGWKTYRDPLMEASHSSIYYWREQMKAMALFTTTEERLLPYRSK) are Cytoplasmic-facing. A helical membrane pass occupies residues 56-76 (WHTLVYIQMVIFFASMSFGLT). Residues 77-88 (ESMGDHVQMGRD) are Extracellular-facing. The chain crosses the membrane as a helical span at residues 89–109 (LAFILGAFFIIFKTYYFCWYG). Residues 110–144 (DELDQVISDLDALHPWAQKGPNPVEYQTGKRWYFV) lie on the Cytoplasmic side of the membrane. The helical transmembrane segment at 145–165 (MAFFLATSWSFFLCILLLLLI) threads the bilayer. Residues 166 to 218 (TSPMWVHQQNLPFHAAFPFQWHEKSLHPISHAIIYLFQSYFAVYCLTWLLCIE) lie on the Extracellular side of the membrane. The helical transmembrane segment at 219–239 (GLSICIYAEITFGIEVLCLEL) threads the bilayer. The Cytoplasmic portion of the chain corresponds to 240 to 275 (RQIHRHNYGLQELRMETNRLVKLHQKIVEILDRTND). A helical transmembrane segment spans residues 276-296 (VFHGTLIMQMGVNFSLVSLSV). The Extracellular portion of the chain corresponds to 297-307 (LEAVEARKDPK). A helical membrane pass occupies residues 308–328 (VVAQFAVLMLLALGHLSMWSY). The Cytoplasmic segment spans residues 329-381 (CGDQLSQKSLQISEAAYEAYDPTKGSKDVYRDLCVIIRRGQDPLIMRASPFPS). The chain crosses the membrane as a helical span at residues 382 to 402 (FNLINYSAILNQCYGILTFLL). Residues 403-406 (KTLD) lie on the Extracellular side of the membrane.

This sequence belongs to the insect chemoreceptor superfamily. Heteromeric odorant receptor channel (TC 1.A.69) family. Or49a subfamily. Interacts with Orco. Complexes exist early in the endomembrane system in olfactory sensory neurons (OSNs), coupling these complexes to the conserved ciliary trafficking pathway.

The protein localises to the cell membrane. Odorant receptor which mediates acceptance or avoidance behavior, depending on its substrates. The odorant receptor repertoire encodes a large collection of odor stimuli that vary widely in identity, intensity, and duration. May form a complex with Orco to form odorant-sensing units, providing sensitive and prolonged odorant signaling and calcium permeability. The polypeptide is Putative odorant receptor 65b (Or65b) (Drosophila melanogaster (Fruit fly)).